The chain runs to 837 residues: Putative outer membrane protein assembly factor TP_0326 (837 aa).

An N-terminal signal peptide occupies residues 1–21; the sequence is MLKKASAFLIASCCVMSLAWA. Over 22–433 the chain is Periplasmic; it reads QANDNWYEGK…ILNVEEQSTA (412 aa). 5 consecutive POTRA domains span residues 31–105, 106–182, 185–273, 276–354, and 357–430; these read KPIS…VKER, PSVK…IQEG, TVVS…VVEG, YRYG…VVER, and SHVE…VEEQ. Residues 434–442 traverse the membrane as a beta stranded segment; that stretch reads NVQFGVTFS. The Extracellular; loop L1 portion of the chain corresponds to 443–450; it reads GVGEAGTF. Residues 451 to 461 traverse the membrane as a beta stranded segment; the sequence is PLSLFCQWEEK. Residues 462 to 468 are Periplasmic-facing; sequence NFLGKGN. The chain crosses the membrane as a beta stranded span at residues 469–476; it reads EISVNATL. Residues 477-478 are Extracellular; loop L2-facing; that stretch reads GS. A beta stranded transmembrane segment spans residues 479–489; that stretch reads EAQSLKLGYVE. At 490–499 the chain is on the periplasmic side; it reads RWFLGSPLTV. A beta stranded transmembrane segment spans residues 500–520; that stretch reads GFDFELTHKNLFVYRAGSYGN. Residues 521–530 are Extracellular; loop L3-facing; that stretch reads GLPHPYTSRE. The beta stranded transmembrane segment at 531 to 543 threads the bilayer; that stretch reads QWASSPGLAESFR. At 544-554 the chain is on the periplasmic side; the sequence is LKYSRFESAIG. Residues 555–568 traverse the membrane as a beta stranded segment; it reads AHTGYQWYPRYAVI. Topologically, residues 569–601 are extracellular; loop L4; sequence RVNGGVDFRVVKNFYDKDNNQPFDLTVKEQLNW. Residues 602–615 form a beta stranded membrane-spanning segment; it reads TSINSFWTSVSFDG. Over 616–623 the chain is Periplasmic; it reads RDFAYDPS. The chain crosses the membrane as a beta stranded span at residues 624 to 636; it reads SGWFLGQRCTFNG. Residues 637–644 lie on the Extracellular; loop L5 side of the membrane; the sequence is LVPFLEKE. The beta stranded transmembrane segment at 645 to 658 threads the bilayer; the sequence is HSFRSDTKAEFYVT. At 659 to 667 the chain is on the periplasmic side; that stretch reads LLNYPVSAV. Residues 668–682 traverse the membrane as a beta stranded segment; it reads WNLKFVLAFYTGVSV. At 683-724 the chain is on the extracellular; loop L6 side; it reads QTYYGRRKSENGKGNGVRSGALVIDGVLVGRGWSEDAKKNTG. The beta stranded transmembrane segment at 725-736 threads the bilayer; that stretch reads DLLLHHWIEFRW. The Periplasmic segment spans residues 737–741; it reads PLAHG. The chain crosses the membrane as a beta stranded span at residues 742–756; the sequence is IVSFDFFFDAAMVYN. Residues 757–786 are Extracellular; loop L7-facing; that stretch reads IESQSPNGSSSASSSSSSSSSSSRTTSSEG. The segment at 761–785 is disordered; it reads SPNGSSSASSSSSSSSSSSRTTSSE. Over residues 765 to 784 the composition is skewed to low complexity; sequence SSSASSSSSSSSSSSRTTSS. The chain crosses the membrane as a beta stranded span at residues 787-799; it reads LYKMSYGPGLRFT. The Periplasmic segment spans residues 800–802; sequence LPQ. Residues 803–814 traverse the membrane as a beta stranded segment; sequence FPLKLAFANTFT. At 815–824 the chain is on the extracellular; loop L8 side; the sequence is SPGGIPKTKK. The chain crosses the membrane as a beta stranded span at residues 825–829; sequence NWNFV. Topologically, residues 830 to 837 are periplasmic; sequence LSFTVNNL.

The protein belongs to the BamA family. As to quaternary structure, part of 2 complexes of about 239 and 164 kDa.

The protein resides in the cell outer membrane. Its function is as follows. Might be part of the outer membrane protein assembly complex, which is involved in assembly and insertion of beta-barrel proteins into the outer membrane. In terms of biological role, both rabbit immune serum and rabbit antiserum specific for extracytoplasmic loop L4 promote bacteria internalization by rabbit peritoneal macrophages. Pools of human syphilitic sera from the USA and Columbia recognize both the N-terminal POTRA-containing and C-terminal beta-barrel domains as well as loop L4, showing this protein stimulates the immune system in both humans and rabbits. This chain is Putative outer membrane protein assembly factor TP_0326 (tp92), found in Treponema pallidum (strain Nichols).